A 597-amino-acid chain; its full sequence is Aspartate--tRNA(Asp/Asn) ligase (597 aa).

Residue Glu172 participates in L-aspartate binding. The tract at residues 196-199 (QLFK) is aspartate. Arg218 serves as a coordination point for L-aspartate. Residues 218-220 (RDE) and Gln227 each bind ATP. His454 contributes to the L-aspartate binding site. ATP is bound at residue Glu488. Arg495 contacts L-aspartate. 540–543 (GLDR) is a binding site for ATP.

This sequence belongs to the class-II aminoacyl-tRNA synthetase family. Type 1 subfamily. As to quaternary structure, homodimer.

The protein resides in the cytoplasm. The enzyme catalyses tRNA(Asx) + L-aspartate + ATP = L-aspartyl-tRNA(Asx) + AMP + diphosphate. Its function is as follows. Aspartyl-tRNA synthetase with relaxed tRNA specificity since it is able to aspartylate not only its cognate tRNA(Asp) but also tRNA(Asn). Reaction proceeds in two steps: L-aspartate is first activated by ATP to form Asp-AMP and then transferred to the acceptor end of tRNA(Asp/Asn). This Chromobacterium violaceum (strain ATCC 12472 / DSM 30191 / JCM 1249 / CCUG 213 / NBRC 12614 / NCIMB 9131 / NCTC 9757 / MK) protein is Aspartate--tRNA(Asp/Asn) ligase.